The primary structure comprises 354 residues: Rhodopsin (354 aa).

The Extracellular segment spans residues 1–36 (MNGTEGPYFNVPMVNTTGIVRSPYEYPQYYLVSPAA). 2 N-linked (GlcNAc...) asparagine glycosylation sites follow: asparagine 2 and asparagine 15. The chain crosses the membrane as a helical span at residues 37–61 (YAALGAYMFFLILVGFPINFLTLYV). The Cytoplasmic segment spans residues 62 to 73 (TLEHKKLRTPLN). A helical membrane pass occupies residues 74–96 (YILLNLAVADLFMVFGGFTTTMY). At 97–110 (TSMHGYFVLGRLGC) the chain is on the extracellular side. A disulfide bridge connects residues cysteine 110 and cysteine 187. The helical transmembrane segment at 111-133 (NLEGFFATLGGEIGLWSLVVLAI) threads the bilayer. The 'Ionic lock' involved in activated form stabilization motif lies at 134–136 (ERW). Residues 134-152 (ERWVVVCKPISNFRFGENH) lie on the Cytoplasmic side of the membrane. The helical transmembrane segment at 153-173 (AIMGLVFTWIMAASCAVPPLV) threads the bilayer. At 174–202 (GWSRYIPEGMQCSCGVDYYTRAEGFNNES) the chain is on the extracellular side. Residues 203-224 (FVVYMFVCHFLIPLIVVFFCYG) form a helical membrane-spanning segment. Over 225 to 252 (RLLCAVKEAAAAQQESETTQRAEREVTR) the chain is Cytoplasmic. Residues 253-274 (MVVIMVIGFLVCWLPYASVAWY) traverse the membrane as a helical segment. Over 275–286 (IFTNQGSEFGPL) the chain is Extracellular. A helical transmembrane segment spans residues 287–308 (FMTIPAFFAKSSSIYNPAIYIC). Lysine 296 is modified (N6-(retinylidene)lysine). Residues 309 to 354 (MNKQFRNCMITTLCCGKNPFEEEEGASTTASKTEASSVSSSSVSPA) lie on the Cytoplasmic side of the membrane. Residues cysteine 322 and cysteine 323 are each lipidated (S-palmitoyl cysteine). The disordered stretch occupies residues 332 to 354 (EGASTTASKTEASSVSSSSVSPA). A compositionally biased stretch (low complexity) spans 334 to 354 (ASTTASKTEASSVSSSSVSPA).

This sequence belongs to the G-protein coupled receptor 1 family. Opsin subfamily. In terms of processing, phosphorylated on some or all of the serine and threonine residues present in the C-terminal region. Post-translationally, contains one covalently linked retinal chromophore.

It localises to the membrane. The protein localises to the cell projection. The protein resides in the cilium. Its subcellular location is the photoreceptor outer segment. In terms of biological role, photoreceptor required for image-forming vision at low light intensity. While most salt water fish species use retinal as chromophore, most freshwater fish use 3-dehydroretinal, or a mixture of retinal and 3-dehydroretinal. Light-induced isomerization of 11-cis to all-trans retinal triggers a conformational change that activates signaling via G-proteins. Subsequent receptor phosphorylation mediates displacement of the bound G-protein alpha subunit by arrestin and terminates signaling. This Oryzias latipes (Japanese rice fish) protein is Rhodopsin (rho).